A 311-amino-acid polypeptide reads, in one-letter code: Probable dihydroorotate dehydrogenase A (fumarate) (311 aa).

Residues lysine 45, 69-73, and asparagine 128 each bind substrate; that span reads NSMGL. FMN is bound at residue 45 to 46; it reads KT. Asparagine 128 provides a ligand contact to FMN. The active-site Nucleophile is the cysteine 131. Lysine 165 and valine 193 together coordinate FMN. Position 194–195 (194–195) interacts with substrate; that stretch reads NS. FMN contacts are provided by residues glycine 220, 248-249, and 270-271; these read GG and GT.

Belongs to the dihydroorotate dehydrogenase family. Type 1 subfamily. As to quaternary structure, homodimer. Requires FMN as cofactor.

The protein localises to the cytoplasm. The catalysed reaction is (S)-dihydroorotate + fumarate = orotate + succinate. The protein operates within pyrimidine metabolism; UMP biosynthesis via de novo pathway. Functionally, catalyzes the conversion of dihydroorotate to orotate with fumarate as the electron acceptor. The sequence is that of Probable dihydroorotate dehydrogenase A (fumarate) (pyrDA) from Streptococcus pneumoniae (strain ATCC BAA-255 / R6).